Here is a 449-residue protein sequence, read N- to C-terminus: Protein trichome birefringence-like 35 (449 aa).

Residues 12–29 (LPLAGLLFILVVTFMILF) traverse the membrane as a helical; Signal-anchor for type II membrane protein segment. The GDS motif motif lies at 185–187 (GDS). A DCXHWCLPGXXDXWN motif motif is present at residues 428 to 442 (DCTHWCVPGVPDVWN).

Belongs to the PC-esterase family. TBL subfamily.

It is found in the membrane. Functionally, may act as a bridging protein that binds pectin and other cell wall polysaccharides. Probably involved in maintaining esterification of pectins. May be involved in the specific O-acetylation of cell wall polymers. The chain is Protein trichome birefringence-like 35 (TBL35) from Arabidopsis thaliana (Mouse-ear cress).